The chain runs to 383 residues: Cell division protein FtsZ (383 aa).

Residues 20–24, 107–109, glutamate 138, arginine 142, and asparagine 186 contribute to the GTP site; these read GGGGN and GTG.

It belongs to the FtsZ family. In terms of assembly, homodimer. Polymerizes to form a dynamic ring structure in a strictly GTP-dependent manner. Interacts directly with several other division proteins.

The protein localises to the cytoplasm. Functionally, essential cell division protein that forms a contractile ring structure (Z ring) at the future cell division site. The regulation of the ring assembly controls the timing and the location of cell division. One of the functions of the FtsZ ring is to recruit other cell division proteins to the septum to produce a new cell wall between the dividing cells. Binds GTP and shows GTPase activity. This Shigella flexneri protein is Cell division protein FtsZ.